Here is a 254-residue protein sequence, read N- to C-terminus: NAD-dependent protein deacylase (254 aa).

The Deacetylase sirtuin-type domain occupies 1–250 (MERLEEARKR…LPPSPEDQAE (250 aa)). 22–41 (GAGISKPSGIPTFRDAEGLW) is a binding site for NAD(+). Residues tyrosine 66 and arginine 69 each coordinate substrate. An NAD(+)-binding site is contributed by 104-107 (QNVD). The active-site Proton acceptor is histidine 122. Residues cysteine 130, cysteine 133, cysteine 149, and cysteine 152 each coordinate Zn(2+). Residues 189–191 (GTS), 215–217 (NPE), and alanine 233 contribute to the NAD(+) site.

The protein belongs to the sirtuin family. Class III subfamily. Requires Zn(2+) as cofactor.

The protein resides in the cytoplasm. It catalyses the reaction N(6)-acetyl-L-lysyl-[protein] + NAD(+) + H2O = 2''-O-acetyl-ADP-D-ribose + nicotinamide + L-lysyl-[protein]. The catalysed reaction is N(6)-succinyl-L-lysyl-[protein] + NAD(+) + H2O = 2''-O-succinyl-ADP-D-ribose + nicotinamide + L-lysyl-[protein]. NAD-dependent lysine deacetylase and desuccinylase that specifically removes acetyl and succinyl groups on target proteins. Modulates the activities of several proteins which are inactive in their acylated form. The chain is NAD-dependent protein deacylase from Thermus thermophilus (strain ATCC BAA-163 / DSM 7039 / HB27).